The following is a 556-amino-acid chain: Guard cell S-type anion channel SLAC1 (556 aa).

Positions 1 to 103 (MERKQSNAHS…GIINGGDGRK (103 aa)) are disordered. Residues 1–189 (MERKQSNAHS…EQWPFLLRFP (189 aa)) lie on the Cytoplasmic side of the membrane. Positions 10 to 36 (STFADINEVEDEAEQELQQQENNNNKR) form a coiled coil. Residues 25 to 34 (ELQQQENNNN) show a composition bias toward low complexity. At S59 the chain carries Phosphoserine; by SRK2E. Basic and acidic residues predominate over residues 69–79 (RESRERDDKKS). Phosphoserine; by SRK2E is present on residues S86, S113, and S120. The span at 86–99 (SFGGFESGGIINGG) shows a compositional bias: gly residues. A Phosphoserine modification is found at S146. The chain crosses the membrane as a helical span at residues 190–210 (IGCFGICLGLSSQAVLWLALA). The Extracellular portion of the chain corresponds to 211–216 (KSPATN). The helical transmembrane segment at 217–237 (FLHITPLINLVVWLFSLVVLV) threads the bilayer. At 238 to 265 (SVSFTYILKCIFYFEAVKREYFHPVRVN) the chain is on the cytoplasmic side. The helical transmembrane segment at 266 to 286 (FFFAPWVVCMFLAISVPPMFS) threads the bilayer. At 287–295 (PNRKYLHPA) the chain is on the extracellular side. Residues 296-316 (IWCVFMGPYFFLELKIYGQWL) traverse the membrane as a helical segment. The Cytoplasmic portion of the chain corresponds to 317–325 (SGGKRRLCK). The chain crosses the membrane as a helical span at residues 326–346 (VANPSSHLSVVGNFVGAILAS). Residues 347–352 (KVGWDE) lie on the Extracellular side of the membrane. Residues 353–373 (VAKFLWAVGFAHYLVVFVTLY) form a helical membrane-spanning segment. Over 374–388 (QRLPTSEALPKELHP) the chain is Cytoplasmic. A helical membrane pass occupies residues 389–409 (VYSMFIAAPSAASIAWNTIYG). Residues 410–418 (QFDGCSRTC) lie on the Extracellular side of the membrane. The helical transmembrane segment at 419–439 (FFIALFLYISLVARINFFTGF) threads the bilayer. Residue K440 is a topological domain, cytoplasmic. A helical membrane pass occupies residues 441–463 (FSVAWWSYTFPMTTASVATIKYA). The Extracellular segment spans residues 464-479 (EAVPGYPSRALALTLS). Residues 480–500 (FISTAMVCVLFVSTLLHAFVW) form a helical membrane-spanning segment. Over 501–556 (QTLFPNDLAIAITKRKLTREKKPFKRAYDLKRWTKQALAKKISAEKDFEAEEESHH) the chain is Cytoplasmic.

This sequence belongs to the SLAC1 S-type anion channel family. As to quaternary structure, homotrimer. Interacts with SRK2E, CPK6, CPK21, CPK23 and PP2CA. The channel is inactivated upon PP2CA and ABI1 binding. Interacts with KAT1, KAT2, KAT3/KC1 and AKT2. Interacts with GHR1. Phosphorylation by SRK2E, especially on Ser-120, activates the channel. Also phosphorylated and activated by CPK21 and CPK23. Abscisic acid (ABA) promotes phosphorylation. This phosphorylation is inhibited by ABI1. Phosphorylated and activated by GHR1; this phosphorylation is repressed by ABI2 but not ABI1. Phosphorylated by HT1 on N-terminus but not C-terminus. Preferentially expressed in guard cells. Also detected in the vascular strands close to the leaf margins.

It is found in the cell membrane. Its activity is regulated as follows. Activated by GHR1-mediated phosphorylation which is negatively regulated by ABI2 but not ABI1. Activation by SRK2E/OST1 and GHR1 is repressed by HT1. Slow, weak voltage-dependent S-type anion efflux channel involved in maintenance of anion homeostasis. Cl(-) efflux through SLAC1 causes membrane depolarization, which activates outward-rectifying K1 channels, leading to KCl and water efflux to reduce turgor further and cause stomatal closure, that reduces water loss and promotes leaf turgor. Essential for stomatal closure in response to CO(2), abscisic acid (ABA), ozone O(3), light/dark transitions, humidity change, calcium ions, hydrogen peroxide H(2)O(2), reactive oxygen species (ROS), and nitric oxide. Binds to the highly selective inward-rectifying potassium channels KAT1 and AKT2, and inhibits their activities. Functions as an essential negative regulator of inward potassium channels in guard cells. Essential for the efficient stomatal closure and opening in guard cells. Involved in the local and/or systemic stomatal responses (e.g. stomatal closure) to light stress. The protein is Guard cell S-type anion channel SLAC1 of Arabidopsis thaliana (Mouse-ear cress).